We begin with the raw amino-acid sequence, 426 residues long: Synaptotagmin-13 (426 aa).

Over 1–6 (MVLSVP) the chain is Vesicular. A helical membrane pass occupies residues 7 to 29 (VIALGATLGTATSILALCGVTCL). Topologically, residues 30–426 (CRHMHPKKGL…QIAMWHQLHL (397 aa)) are cytoplasmic. C2 domains follow at residues 158-275 (QAPK…AQWG) and 287-422 (GAGE…AMWH).

Belongs to the synaptotagmin family. In terms of assembly, interacts with NRXN1. Expressed in brain, heart, spleen, lung and testis.

The protein localises to the cytoplasmic vesicle membrane. Its function is as follows. May be involved in transport vesicle docking to the plasma membrane. The chain is Synaptotagmin-13 (Syt13) from Mus musculus (Mouse).